We begin with the raw amino-acid sequence, 47 residues long: uncharacterized protein (47 aa).

This is an uncharacterized protein from Escherichia coli.